A 449-amino-acid chain; its full sequence is Tripartite motif-containing protein 64B (449 aa).

The RING-type zinc finger occupies 15 to 56 (CCICVNYFIDPVTIDCGHSFCRPCLCLCSEEGRAPMRCPSCR). The B box-type zinc-finger motif lies at 87–128 (SSDNICVLHEETKELFCEADKRLLCGPCSESPEHMAHSHSPI). The Zn(2+) site is built by Cys92, His95, Cys114, and His120. Residues 189–225 (LDEEEQRHLQALEREAEELFQQLQDSQVRMTQHLERM) adopt a coiled-coil conformation. The region spanning 268 to 449 (ELTSWCITGV…LRPFFCFGCT (182 aa)) is the B30.2/SPRY domain.

This sequence belongs to the TRIM/RBCC family.

The protein is Tripartite motif-containing protein 64B (TRIM64B) of Homo sapiens (Human).